We begin with the raw amino-acid sequence, 320 residues long: Protein MRH1 (320 aa).

Residues 1 to 34 (MSTFETLIKRGGNEAIKINPPTGADFHITSRGSD) are Extracellular-facing. Residues 35–55 (WFWTCFCCYLLFGLILTFLMF) traverse the membrane as a helical segment. Residues 56-62 (RKPVNDR) are Cytoplasmic-facing. The helical transmembrane segment at 63-83 (FFYLTGIAPNFFMCIAYFTMA) threads the bilayer. Topologically, residues 84–116 (SNLGWIPVKAKYNHVQTSTQKEHPGYRQIFYSR) are extracellular. The helical transmembrane segment at 117–137 (FVGWFLALPWPIIQICMLAGT) threads the bilayer. Residues 138–141 (PFWQ) lie on the Cytoplasmic side of the membrane. A helical transmembrane segment spans residues 142-162 (MAFNVCITEFFTVCWLIAACV). Residues 163–167 (HSTYK) lie on the Extracellular side of the membrane. Residues 168-188 (WGYYTIGLGAAIVVSISVMTT) traverse the membrane as a helical segment. At 189–204 (SYNLVKQRDNDIRLTF) the chain is on the cytoplasmic side. A helical membrane pass occupies residues 205–225 (LVFFSIIMFLWIIAYPTCFGI). The Extracellular portion of the chain corresponds to 226 to 238 (TDGGNVLQPDSAG). A helical transmembrane segment spans residues 239-259 (IFYGIIDLILMCFIPTLLVPI). Over 260 to 320 (ANHFGADKLG…KSKKSKKSEE (61 aa)) the chain is Cytoplasmic. The disordered stretch occupies residues 285–320 (APVASPRPAATPNLSKDKKKKSKKSKKSKKSKKSEE). Ser-289 is modified (phosphoserine). Thr-295 is subject to Phosphothreonine. At Ser-299 the chain carries Phosphoserine. Residues 301-320 (DKKKKSKKSKKSKKSKKSEE) are compositionally biased toward basic residues.

This sequence belongs to the archaeal/bacterial/fungal opsin family.

The protein resides in the cell membrane. It localises to the mitochondrion. Its subcellular location is the bud. The sequence is that of Protein MRH1 (MRH1) from Saccharomyces cerevisiae (strain ATCC 204508 / S288c) (Baker's yeast).